A 228-amino-acid chain; its full sequence is Mediator of RNA polymerase II transcription subunit 7-B (228 aa).

This sequence belongs to the Mediator complex subunit 7 family. In terms of assembly, component of the Mediator complex.

It localises to the nucleus. In terms of biological role, component of the Mediator complex, a coactivator involved in the regulated transcription of nearly all RNA polymerase II-dependent genes. Mediator functions as a bridge to convey information from gene-specific regulatory proteins to the basal RNA polymerase II transcription machinery. Mediator is recruited to promoters by direct interactions with regulatory proteins and serves as a scaffold for the assembly of a functional preinitiation complex with RNA polymerase II and the general transcription factors. In Xenopus laevis (African clawed frog), this protein is Mediator of RNA polymerase II transcription subunit 7-B (med7-b).